A 277-amino-acid polypeptide reads, in one-letter code: 3-methyl-2-oxobutanoate hydroxymethyltransferase (277 aa).

Residues D53 and D96 each coordinate Mg(2+). Residues D53–S54, D96, and K126 contribute to the 3-methyl-2-oxobutanoate site. E128 contacts Mg(2+). E195 acts as the Proton acceptor in catalysis.

This sequence belongs to the PanB family. As to quaternary structure, homodecamer; pentamer of dimers. The cofactor is Mg(2+).

The protein localises to the cytoplasm. The enzyme catalyses 3-methyl-2-oxobutanoate + (6R)-5,10-methylene-5,6,7,8-tetrahydrofolate + H2O = 2-dehydropantoate + (6S)-5,6,7,8-tetrahydrofolate. It participates in cofactor biosynthesis; (R)-pantothenate biosynthesis; (R)-pantoate from 3-methyl-2-oxobutanoate: step 1/2. Catalyzes the reversible reaction in which hydroxymethyl group from 5,10-methylenetetrahydrofolate is transferred onto alpha-ketoisovalerate to form ketopantoate. This is 3-methyl-2-oxobutanoate hydroxymethyltransferase from Chlorobaculum parvum (strain DSM 263 / NCIMB 8327) (Chlorobium vibrioforme subsp. thiosulfatophilum).